Here is a 143-residue protein sequence, read N- to C-terminus: 3-hydroxyacyl-[acyl-carrier-protein] dehydratase FabZ (143 aa).

Residue H49 is part of the active site.

Belongs to the thioester dehydratase family. FabZ subfamily.

It is found in the cytoplasm. It carries out the reaction a (3R)-hydroxyacyl-[ACP] = a (2E)-enoyl-[ACP] + H2O. In terms of biological role, involved in unsaturated fatty acids biosynthesis. Catalyzes the dehydration of short chain beta-hydroxyacyl-ACPs and long chain saturated and unsaturated beta-hydroxyacyl-ACPs. This is 3-hydroxyacyl-[acyl-carrier-protein] dehydratase FabZ from Ehrlichia chaffeensis (strain ATCC CRL-10679 / Arkansas).